A 789-amino-acid chain; its full sequence is Glycerol-3-phosphate acyltransferase (789 aa).

The short motif at 276–281 is the HXXXXD motif element; that stretch reads HRSYID.

This sequence belongs to the GPAT/DAPAT family.

Its subcellular location is the cell membrane. It catalyses the reaction sn-glycerol 3-phosphate + an acyl-CoA = a 1-acyl-sn-glycero-3-phosphate + CoA. The protein operates within phospholipid metabolism; CDP-diacylglycerol biosynthesis; CDP-diacylglycerol from sn-glycerol 3-phosphate: step 1/3. This Mycobacterium bovis (strain ATCC BAA-935 / AF2122/97) protein is Glycerol-3-phosphate acyltransferase.